A 249-amino-acid chain; its full sequence is tRNA (guanine-N(1)-)-methyltransferase (249 aa).

S-adenosyl-L-methionine is bound by residues glycine 113 and 133 to 138 (IGDYVL).

This sequence belongs to the RNA methyltransferase TrmD family. Homodimer.

It localises to the cytoplasm. The enzyme catalyses guanosine(37) in tRNA + S-adenosyl-L-methionine = N(1)-methylguanosine(37) in tRNA + S-adenosyl-L-homocysteine + H(+). In terms of biological role, specifically methylates guanosine-37 in various tRNAs. The sequence is that of tRNA (guanine-N(1)-)-methyltransferase from Aeromonas hydrophila subsp. hydrophila (strain ATCC 7966 / DSM 30187 / BCRC 13018 / CCUG 14551 / JCM 1027 / KCTC 2358 / NCIMB 9240 / NCTC 8049).